Reading from the N-terminus, the 304-residue chain is N-acetylmuramic acid 6-phosphate etherase (304 aa).

The SIS domain maps to 58–221 (IAERIHRGGR…STGVMIKLGK (164 aa)). The active-site Proton donor is the Glu-86. Glu-117 is an active-site residue.

It belongs to the GCKR-like family. MurNAc-6-P etherase subfamily. As to quaternary structure, homodimer.

The catalysed reaction is N-acetyl-D-muramate 6-phosphate + H2O = N-acetyl-D-glucosamine 6-phosphate + (R)-lactate. Its pathway is amino-sugar metabolism; N-acetylmuramate degradation. Its function is as follows. Specifically catalyzes the cleavage of the D-lactyl ether substituent of MurNAc 6-phosphate, producing GlcNAc 6-phosphate and D-lactate. The polypeptide is N-acetylmuramic acid 6-phosphate etherase (Clostridium beijerinckii (strain ATCC 51743 / NCIMB 8052) (Clostridium acetobutylicum)).